Consider the following 209-residue polypeptide: Vacuolar protein sorting-associated protein 28 homolog (209 aa).

Positions 1–105 (MSQNSNLMRE…REGRPITVKD (105 aa)) constitute a VPS28 N-terminal domain. Residues 109–205 (NVLKHIASIV…AYQSFQKALN (97 aa)) form the VPS28 C-terminal domain.

The protein belongs to the VPS28 family. In terms of assembly, component of the ESCRT-I complex (endosomal sorting complex required for transport I).

It localises to the endosome. Its function is as follows. Component of the ESCRT-I complex, a regulator of vesicular trafficking process. This chain is Vacuolar protein sorting-associated protein 28 homolog, found in Caenorhabditis briggsae.